The primary structure comprises 242 residues: Segregation and condensation protein A (242 aa).

The protein belongs to the ScpA family. In terms of assembly, component of a cohesin-like complex composed of ScpA, ScpB and the Smc homodimer, in which ScpA and ScpB bind to the head domain of Smc. The presence of the three proteins is required for the association of the complex with DNA.

It localises to the cytoplasm. Its function is as follows. Participates in chromosomal partition during cell division. May act via the formation of a condensin-like complex containing Smc and ScpB that pull DNA away from mid-cell into both cell halves. The sequence is that of Segregation and condensation protein A from Streptococcus pneumoniae serotype 4 (strain ATCC BAA-334 / TIGR4).